A 179-amino-acid polypeptide reads, in one-letter code: Bifunctional protein PyrR (179 aa).

The PRPP-binding signature appears at 100–112; the sequence is VILVDDVLFTGRT.

Belongs to the purine/pyrimidine phosphoribosyltransferase family. PyrR subfamily.

The enzyme catalyses UMP + diphosphate = 5-phospho-alpha-D-ribose 1-diphosphate + uracil. Regulates the transcription of the pyrimidine nucleotide (pyr) operon in response to exogenous pyrimidines. Functionally, also displays a weak uracil phosphoribosyltransferase activity which is not physiologically significant. This Actinobacillus succinogenes (strain ATCC 55618 / DSM 22257 / CCUG 43843 / 130Z) protein is Bifunctional protein PyrR.